We begin with the raw amino-acid sequence, 841 residues long: Alpha-glucan phosphorylase 2, cytosolic (841 aa).

The interval 1–24 is disordered; the sequence is MANANGKAATSLPEKISAKANPEA. The residue at position 687 (Lys-687) is an N6-(pyridoxal phosphate)lysine.

Belongs to the glycogen phosphorylase family. It depends on pyridoxal 5'-phosphate as a cofactor.

The protein localises to the cytoplasm. The catalysed reaction is [(1-&gt;4)-alpha-D-glucosyl](n) + phosphate = [(1-&gt;4)-alpha-D-glucosyl](n-1) + alpha-D-glucose 1-phosphate. Functionally, phosphorylase is an important allosteric enzyme in carbohydrate metabolism. Enzymes from different sources differ in their regulatory mechanisms and in their natural substrates. However, all known phosphorylases share catalytic and structural properties. The polypeptide is Alpha-glucan phosphorylase 2, cytosolic (PHS2) (Arabidopsis thaliana (Mouse-ear cress)).